The chain runs to 70 residues: Small ribosomal subunit protein bS21A (70 aa).

The protein belongs to the bacterial ribosomal protein bS21 family.

The polypeptide is Small ribosomal subunit protein bS21A (rpsU1) (Burkholderia mallei (strain ATCC 23344)).